The primary structure comprises 390 residues: Zinc finger protein 121 (390 aa).

Residues 88 to 110 (FEYSDCEEAFVDQSHLQANRITH) form a C2H2-type 1; degenerate zinc finger. The segment at 116 to 138 (YEQKQCGRAFTYSTSHAVSVKMH) adopts a C2H2-type 2; degenerate zinc-finger fold. C2H2-type zinc fingers lie at residues 144-166 (YECK…MRTH), 172-194 (YECK…VRIH), 200-222 (YQCK…VRIH), 228-250 (YECN…FKTH), 256-278 (FECK…FRIH), 284-306 (YKCK…VKIH), 312-334 (YECK…IRTH), 340-362 (YICK…VRIH), and 368-390 (YICN…LKTH).

This sequence belongs to the krueppel C2H2-type zinc-finger protein family.

The protein localises to the nucleus. May be involved in transcriptional regulation. This is Zinc finger protein 121 (ZNF121) from Homo sapiens (Human).